A 308-amino-acid polypeptide reads, in one-letter code: Maspardin (308 aa).

Residues 87–159 form the AB hydrolase-1 domain; the sequence is FCDGFRKLLD…NSFWLMPAFM (73 aa). The residue at position 304 (serine 304) is a Phosphoserine.

This sequence belongs to the AB hydrolase superfamily. Interacts with CD4. Interacts with ALDH16A1. In terms of tissue distribution, expressed in all tissues tested, including heart, brain, placenta, lung, liver, skeletal muscle, kidney and pancreas. Expressed in J.CaM1.6, HuT 78 and HeLa cell lines (at protein level).

It is found in the cytoplasm. The protein resides in the cytosol. The protein localises to the membrane. It localises to the endosome membrane. Its subcellular location is the golgi apparatus. It is found in the trans-Golgi network membrane. Its function is as follows. May play a role as a negative regulatory factor in CD4-dependent T-cell activation. The protein is Maspardin (SPG21) of Homo sapiens (Human).